Reading from the N-terminus, the 156-residue chain is Small ribosomal subunit protein uS7 (156 aa).

It belongs to the universal ribosomal protein uS7 family. As to quaternary structure, part of the 30S ribosomal subunit. Contacts proteins S9 and S11.

In terms of biological role, one of the primary rRNA binding proteins, it binds directly to 16S rRNA where it nucleates assembly of the head domain of the 30S subunit. Is located at the subunit interface close to the decoding center, probably blocks exit of the E-site tRNA. The protein is Small ribosomal subunit protein uS7 of Streptococcus equi subsp. equi (strain 4047).